A 1023-amino-acid chain; its full sequence is Sodium/potassium-transporting ATPase subunit alpha-1 (1023 aa).

A propeptide spanning residues 1 to 5 is cleaved from the precursor; that stretch reads MGKGV. Positions 1-11 are enriched in basic and acidic residues; that stretch reads MGKGVGRDKYE. The tract at residues 1–39 is disordered; sequence MGKGVGRDKYEPAAVSEHGDKKGKKAKKERDMDELKKEV. Residues 6 to 96 are Cytoplasmic-facing; sequence GRDKYEPAAV…PEWVKFCRQL (91 aa). Lysine 9 is subject to N6-acetyllysine. Tyrosine 10 is modified (phosphotyrosine). Serine 16 is subject to Phosphoserine. The residue at position 21 (lysine 21) is an N6-acetyllysine. Basic and acidic residues predominate over residues 28–39; sequence KERDMDELKKEV. Residues serine 40 and serine 47 each carry the phosphoserine modification. The phosphoinositide-3 kinase binding stretch occupies residues 82-84; sequence PPP. The chain crosses the membrane as a helical span at residues 97–117; sequence FGGFSMLLWIGAILCFLAYGI. Residues 118–129 lie on the Extracellular side of the membrane; sequence RSATEEEPPNDD. The chain crosses the membrane as a helical span at residues 130–150; sequence LYLGVVLSAVVIITGCFSYYQ. Topologically, residues 151–291 are cytoplasmic; sequence EAKSSKIMES…TPIAEEIEHF (141 aa). A disordered region spans residues 216 to 235; the sequence is SSLTGESEPQTRSPDFTNEN. Serine 228 carries the post-translational modification Phosphoserine. At tyrosine 260 the chain carries Phosphotyrosine. A helical membrane pass occupies residues 292–312; it reads IHLITGVAVFLGVSFFILSLI. At 313 to 319 the chain is on the extracellular side; the sequence is LEYTWLE. A helical transmembrane segment spans residues 320-340; that stretch reads AVIFLIGIIVANVPEGLLATV. The Cytoplasmic portion of the chain corresponds to 341 to 775; it reads TVCLTLTAKR…RLIFDNLKKS (435 aa). The active-site 4-aspartylphosphate intermediate is aspartate 376. Phosphoserine is present on residues serine 452 and serine 484. Lysine 487 lines the ATP pocket. The residue at position 542 (tyrosine 542) is a Phosphotyrosine. Residues 596–717 are mediates interaction with SCN7A; sequence RAAVPDAVGK…QGAIVAVTGD (122 aa). Lysine 661 bears the N6-succinyllysine mark. Residues serine 668 and serine 675 each carry the phosphoserine modification. Mg(2+) contacts are provided by aspartate 717 and aspartate 721. Residues 776 to 798 traverse the membrane as a helical segment; it reads IAYTLTSNIPEITPFLIFIIANI. Over 799–801 the chain is Extracellular; sequence PLP. The helical transmembrane segment at 802–824 threads the bilayer; it reads LGTVTILCIDLGTDMVPAISLAY. Topologically, residues 825 to 849 are cytoplasmic; that stretch reads EQAESDIMKRQPRNPKTDKLVNERL. A helical transmembrane segment spans residues 850–872; it reads ISMAYGQIGMIQALGGFFTYFVI. Over 873 to 915 the chain is Extracellular; it reads LAENGFLPFHLLGIRETWDDRWVNDVEDSYGQQWTYEQRKIVE. Residues 916 to 936 form a helical membrane-spanning segment; sequence FTCHTAFFVSIVVVQWADLVI. The Cytoplasmic portion of the chain corresponds to 937–952; the sequence is CKTRRNSVFQQGMKNK. Serine 943 bears the Phosphoserine; by PKA mark. A helical membrane pass occupies residues 953 to 973; sequence ILIFGLFEETALAAFLSYCPG. Residues 974–979 are Extracellular-facing; that stretch reads MGAALR. Residues 980-1000 traverse the membrane as a helical segment; the sequence is MYPLKPTWWFCAFPYSLLIFV. Residues 1001 to 1023 are Cytoplasmic-facing; sequence YDEVRKLIIRRRPGGWVEKETYY.

It belongs to the cation transport ATPase (P-type) (TC 3.A.3) family. Type IIC subfamily. In terms of assembly, the sodium/potassium-transporting ATPase is composed of a catalytic alpha subunit, an auxiliary non-catalytic beta subunit and an additional regulatory subunit. Interacts with regulatory subunit FXYD1. Interacts with regulatory subunit FXYD3. Interacts with SIK1. Interacts with SLC35G1 and STIM1. Interacts with CLN3; this interaction regulates the sodium/potassium-transporting ATPase complex localization at the plasma membrane. Interacts with SCN7A; activates ATP1A1 P-type sodium:potassium-exchanging transporter activity which indirectly signals to nearby neurons to regulate sodium homeostasis. Post-translationally, phosphorylation on Tyr-10 modulates pumping activity. Phosphorylation of Ser-943 by PKA modulates the response of ATP1A1 to PKC. Dephosphorylation by protein phosphatase 2A (PP2A) following increases in intracellular sodium, leading to increase catalytic activity.

The protein resides in the cell membrane. It localises to the basolateral cell membrane. The protein localises to the sarcolemma. Its subcellular location is the cell projection. It is found in the axon. The protein resides in the melanosome. It carries out the reaction K(+)(out) + Na(+)(in) + ATP + H2O = K(+)(in) + Na(+)(out) + ADP + phosphate + H(+). In terms of biological role, this is the catalytic component of the active enzyme, which catalyzes the hydrolysis of ATP coupled with the exchange of sodium and potassium ions across the plasma membrane. This action creates the electrochemical gradient of sodium and potassium ions, providing the energy for active transport of various nutrients. Could also be part of an osmosensory signaling pathway that senses body-fluid sodium levels and controls salt intake behavior as well as voluntary water intake to regulate sodium homeostasis. This Mus musculus (Mouse) protein is Sodium/potassium-transporting ATPase subunit alpha-1 (Atp1a1).